The chain runs to 162 residues: Cyclic pyranopterin monophosphate synthase (162 aa).

Substrate-binding positions include 75–77 and 113–114; these read LCH and ME. Aspartate 128 is a catalytic residue.

Belongs to the MoaC family. As to quaternary structure, homohexamer; trimer of dimers.

It catalyses the reaction (8S)-3',8-cyclo-7,8-dihydroguanosine 5'-triphosphate = cyclic pyranopterin phosphate + diphosphate. It functions in the pathway cofactor biosynthesis; molybdopterin biosynthesis. Catalyzes the conversion of (8S)-3',8-cyclo-7,8-dihydroguanosine 5'-triphosphate to cyclic pyranopterin monophosphate (cPMP). In Burkholderia ambifaria (strain MC40-6), this protein is Cyclic pyranopterin monophosphate synthase.